The primary structure comprises 454 residues: Bifunctional protein GlmU (454 aa).

The pyrophosphorylase stretch occupies residues 1 to 232 (MTDRTCLSIV…VDNVIGINNR (232 aa)). UDP-N-acetyl-alpha-D-glucosamine-binding positions include 11–14 (LAAG), Lys-25, Gln-78, and 83–84 (GT). Asp-108 is a binding site for Mg(2+). UDP-N-acetyl-alpha-D-glucosamine-binding residues include Gly-144, Glu-158, Asn-173, and Asn-230. Asn-230 is a binding site for Mg(2+). The segment at 233-253 (AELAEAETIWQNRKRRELMLS) is linker. Residues 254 to 454 (GVTLIAPETV…AIKAAKSVSK (201 aa)) form an N-acetyltransferase region. 2 residues coordinate UDP-N-acetyl-alpha-D-glucosamine: Arg-319 and Lys-337. The active-site Proton acceptor is the His-349. UDP-N-acetyl-alpha-D-glucosamine-binding residues include Tyr-352 and Asn-363. Acetyl-CoA contacts are provided by residues Ala-366, 372–373 (NY), Ser-391, Ser-409, and Arg-426.

In the N-terminal section; belongs to the N-acetylglucosamine-1-phosphate uridyltransferase family. It in the C-terminal section; belongs to the transferase hexapeptide repeat family. In terms of assembly, homotrimer. Requires Mg(2+) as cofactor.

It localises to the cytoplasm. It carries out the reaction alpha-D-glucosamine 1-phosphate + acetyl-CoA = N-acetyl-alpha-D-glucosamine 1-phosphate + CoA + H(+). It catalyses the reaction N-acetyl-alpha-D-glucosamine 1-phosphate + UTP + H(+) = UDP-N-acetyl-alpha-D-glucosamine + diphosphate. It functions in the pathway nucleotide-sugar biosynthesis; UDP-N-acetyl-alpha-D-glucosamine biosynthesis; N-acetyl-alpha-D-glucosamine 1-phosphate from alpha-D-glucosamine 6-phosphate (route II): step 2/2. It participates in nucleotide-sugar biosynthesis; UDP-N-acetyl-alpha-D-glucosamine biosynthesis; UDP-N-acetyl-alpha-D-glucosamine from N-acetyl-alpha-D-glucosamine 1-phosphate: step 1/1. Its pathway is bacterial outer membrane biogenesis; LPS lipid A biosynthesis. In terms of biological role, catalyzes the last two sequential reactions in the de novo biosynthetic pathway for UDP-N-acetylglucosamine (UDP-GlcNAc). The C-terminal domain catalyzes the transfer of acetyl group from acetyl coenzyme A to glucosamine-1-phosphate (GlcN-1-P) to produce N-acetylglucosamine-1-phosphate (GlcNAc-1-P), which is converted into UDP-GlcNAc by the transfer of uridine 5-monophosphate (from uridine 5-triphosphate), a reaction catalyzed by the N-terminal domain. This is Bifunctional protein GlmU from Brucella melitensis biotype 1 (strain ATCC 23456 / CCUG 17765 / NCTC 10094 / 16M).